The sequence spans 223 residues: Deoxyribose-phosphate aldolase (223 aa).

The Proton donor/acceptor role is filled by Asp91. Lys154 (schiff-base intermediate with acetaldehyde) is an active-site residue. The active-site Proton donor/acceptor is Lys183.

It belongs to the DeoC/FbaB aldolase family. DeoC type 1 subfamily.

Its subcellular location is the cytoplasm. It carries out the reaction 2-deoxy-D-ribose 5-phosphate = D-glyceraldehyde 3-phosphate + acetaldehyde. It participates in carbohydrate degradation; 2-deoxy-D-ribose 1-phosphate degradation; D-glyceraldehyde 3-phosphate and acetaldehyde from 2-deoxy-alpha-D-ribose 1-phosphate: step 2/2. Its function is as follows. Catalyzes a reversible aldol reaction between acetaldehyde and D-glyceraldehyde 3-phosphate to generate 2-deoxy-D-ribose 5-phosphate. The protein is Deoxyribose-phosphate aldolase of Geobacillus kaustophilus (strain HTA426).